The chain runs to 580 residues: WD repeat-containing protein 46 (580 aa).

The interval 34–108 (SWKEYKKMKQ…QQEKMKVTKD (75 aa)) is disordered. Composition is skewed to basic and acidic residues over residues 64 to 85 (TEGRAKKPKVLTKEQLERHDTG) and 98 to 108 (LQQEKMKVTKD). WD repeat units lie at residues 193 to 234 (AALD…YTYV), 235 to 272 (YDNLGTELHCLKTMYDTARLEFLPHHFLLVGSSRNSFL), 274 to 312 (YVDVSVGKQVASFATKSGTLDVMCQNPANAIIHTGHTNG), 315 to 354 (SLWSPNSKEPLVKILTHLSAVKGIAVDDQGNYMATTGLDR), 357 to 396 (RIWDVRMFRQLHAYSLPFGVSNVAISQKMNVACAVGNHVQ), and 399 to 436 (RGMHNGTCKEPYLVHNCGGVVTDLRFVPWEDVLGIGHA).

Part of the small subunit (SSU) processome.

It is found in the nucleus. It localises to the nucleolus. Functionally, scaffold component of the nucleolar structure. Part of the small subunit (SSU) processome, first precursor of the small eukaryotic ribosomal subunit. Required for 18S rRNA processing. Plays a role in negative regulation of detoxification genes by inhibiting protein levels of transcription factor skn-1, leading to down-regulation of skn-1 target genes. The sequence is that of WD repeat-containing protein 46 from Caenorhabditis elegans.